The sequence spans 166 residues: Glutamyl-tRNA(Gln) amidotransferase subunit C-2, mitochondrial (166 aa).

The protein belongs to the GatC family. In terms of assembly, subunit of the heterotrimeric GatCAB amidotransferase (AdT) complex, composed of A, B and C subunits.

The protein resides in the mitochondrion. The enzyme catalyses L-glutamyl-tRNA(Gln) + L-glutamine + ATP + H2O = L-glutaminyl-tRNA(Gln) + L-glutamate + ADP + phosphate + H(+). Allows the formation of correctly charged Gln-tRNA(Gln) through the transamidation of misacylated Glu-tRNA(Gln) in the mitochondria. The reaction takes place in the presence of glutamine and ATP through an activated gamma-phospho-Glu-tRNA(Gln). The sequence is that of Glutamyl-tRNA(Gln) amidotransferase subunit C-2, mitochondrial from Culex quinquefasciatus (Southern house mosquito).